The following is a 126-amino-acid chain: Histone H2B-alpha (126 aa).

The segment at 1 to 34 (MSAAEKKPASKAPAGKAPRDTMKSADKKRGKNRK) is disordered. Residues Lys6 and Lys7 each carry the N6-acetyllysine; alternate modification. Glycyl lysine isopeptide (Lys-Gly) (interchain with G-Cter in SUMO); alternate cross-links involve residues Lys6 and Lys7. A Phosphoserine modification is found at Ser10. Lys11 is subject to N6-acetyllysine. The segment covering 17 to 27 (APRDTMKSADK) has biased composition (basic and acidic residues). A Glycyl lysine isopeptide (Lys-Gly) (interchain with G-Cter in ubiquitin) cross-link involves residue Lys120.

Belongs to the histone H2B family. As to quaternary structure, the nucleosome is a histone octamer containing two molecules each of H2A, H2B, H3 and H4 assembled in one H3-H4 heterotetramer and two H2A-H2B heterodimers. The octamer wraps approximately 147 bp of DNA. Interacts with rik1. Post-translationally, monoubiquitinated by the rhp6/ubc2-bre1 complex to form H2BK123ub1. H2BK123ub1 gives a specific tag for epigenetic transcriptional activation and is also prerequisite for H3K4me and H3K79me formation. H2BK123ub1 also modulates the formation of double-strand breaks during meiosis and is a prerequisite for DNA-damage checkpoint activation. In terms of processing, phosphorylated by shk1 to form H2BS10ph during progression through meiotic prophase. May be correlated with chromosome condensation. Acetylation of N-terminal lysines and particularly formation of H2BK11ac has a positive effect on transcription. Post-translationally, sumoylation to form H2BK6su or H2BK7su occurs preferentially near the telomeres and represses gene transcription.

The protein resides in the nucleus. It is found in the chromosome. Core component of nucleosome. Nucleosomes wrap and compact DNA into chromatin, limiting DNA accessibility to the cellular machineries which require DNA as a template. Histones thereby play a central role in transcription regulation, DNA repair, DNA replication and chromosomal stability. DNA accessibility is regulated via a complex set of post-translational modifications of histones, also called histone code, and nucleosome remodeling. This is Histone H2B-alpha (htb1) from Schizosaccharomyces pombe (strain 972 / ATCC 24843) (Fission yeast).